The primary structure comprises 169 residues: Thermonuclease (169 aa).

Positions M1–S26 are cleaved as a signal peptide. Catalysis depends on residues R65, E73, and R115.

It belongs to the thermonuclease family. It depends on Ca(2+) as a cofactor.

The protein localises to the secreted. It carries out the reaction Endonucleolytic cleavage to nucleoside 3'-phosphates and 3'-phosphooligonucleotide end-products.. Functionally, enzyme that catalyzes the hydrolysis of both DNA and RNA at the 5'-position of the phosphodiester bond. This chain is Thermonuclease (nucH), found in Staphylococcus hyicus.